A 317-amino-acid polypeptide reads, in one-letter code: Tenomodulin (317 aa).

The Cytoplasmic segment spans residues 1 to 30 (MAKNPPENCEGCHILNAEALKSKKIRKSLK). Residues 31–50 (ICGLVFGILALTLIVLFWGS) traverse the membrane as a helical; Signal-anchor for type II membrane protein segment. Residues 51 to 317 (KHFWPEVSKK…WWVARMLGRV (267 aa)) lie on the Extracellular side of the membrane. Residues 93–186 (GNGTDETLEV…ICDNVTMYWI (94 aa)) form the BRICHOS domain. Asparagine 94 carries an N-linked (GlcNAc...) asparagine glycan. An intrachain disulfide couples cysteine 120 to cysteine 178. An N-linked (GlcNAc...) asparagine glycan is attached at asparagine 180. Serine 239 carries the phosphoserine modification.

This sequence belongs to the chondromodulin-1 family. Highly expressed in tendons.

It is found in the membrane. The protein resides in the nucleus envelope. Its function is as follows. May be an angiogenesis inhibitor. The sequence is that of Tenomodulin (Tnmd) from Rattus norvegicus (Rat).